The chain runs to 382 residues: MKITQLTTYRVPPRWMFLRIETDEGLIGWGEPVVEGHARAVQAAVHELEPYLIGQDPARINDLWQVMYRAGFYRGGAVFMSAIAGVDQALWDIKGKALGVPVYQLLGGLVRDRMRTYGWVGGDRPADVIDGIRQRVDAGFTHFKLNGCEELGIIDSSRAVDAAVARVAQIRAAFGNTVEFGLDFHGRVSVAMAAVLIKELEYLRPLFIEEPVLAEQAEHYPKLAAKTHLPLAAGERMYSRFEFKRVLAAGGIAILQPDLSHAGGISECLKIAAMAEAHDVAIAPHCPLGPIALASCLHVDYVSWNATLQEQGMGMHYNRGGEVLDYVLNPQDFRLDNGFIAPFTKPGLGVEINEALVLERSRDCPDWRNPVWRHADGSVAEW.

Residue aspartate 183 participates in Mg(2+) binding. The active-site Proton donor is the histidine 185. Positions 209 and 235 each coordinate Mg(2+). Histidine 285 functions as the Proton acceptor in the catalytic mechanism.

This sequence belongs to the mandelate racemase/muconate lactonizing enzyme family. GalD subfamily. The cofactor is Mg(2+).

The catalysed reaction is D-galactonate = 2-dehydro-3-deoxy-D-galactonate + H2O. It participates in carbohydrate acid metabolism; D-galactonate degradation; D-glyceraldehyde 3-phosphate and pyruvate from D-galactonate: step 1/3. Functionally, catalyzes the dehydration of D-galactonate to 2-keto-3-deoxy-D-galactonate. In Verminephrobacter eiseniae (strain EF01-2), this protein is D-galactonate dehydratase.